The primary structure comprises 184 residues: Protein Syd (184 aa).

The protein belongs to the Syd family.

The protein localises to the cell inner membrane. Functionally, interacts with the SecY protein in vivo. May bind preferentially to an uncomplexed state of SecY, thus functioning either as a chelating agent for excess SecY in the cell or as a regulatory factor that negatively controls the translocase function. In Edwardsiella ictaluri (strain 93-146), this protein is Protein Syd.